The chain runs to 165 residues: Large ribosomal subunit protein uL10 (165 aa).

Belongs to the universal ribosomal protein uL10 family. As to quaternary structure, part of the ribosomal stalk of the 50S ribosomal subunit. The N-terminus interacts with L11 and the large rRNA to form the base of the stalk. The C-terminus forms an elongated spine to which L12 dimers bind in a sequential fashion forming a multimeric L10(L12)X complex.

In terms of biological role, forms part of the ribosomal stalk, playing a central role in the interaction of the ribosome with GTP-bound translation factors. The protein is Large ribosomal subunit protein uL10 of Buchnera aphidicola subsp. Schizaphis graminum (strain Sg).